The primary structure comprises 219 residues: 3-dehydroquinate dehydratase (219 aa).

Residues serine 10, 29-31 (EVR), and arginine 59 contribute to the 3-dehydroquinate site. Histidine 116 (proton donor/acceptor) is an active-site residue. Catalysis depends on lysine 142, which acts as the Schiff-base intermediate with substrate. 3-dehydroquinate-binding residues include arginine 180 and glutamine 203.

It belongs to the type-I 3-dehydroquinase family. As to quaternary structure, homodimer.

The enzyme catalyses 3-dehydroquinate = 3-dehydroshikimate + H2O. Its pathway is metabolic intermediate biosynthesis; chorismate biosynthesis; chorismate from D-erythrose 4-phosphate and phosphoenolpyruvate: step 3/7. Involved in the third step of the chorismate pathway, which leads to the biosynthesis of aromatic amino acids. Catalyzes the cis-dehydration of 3-dehydroquinate (DHQ) and introduces the first double bond of the aromatic ring to yield 3-dehydroshikimate. This is 3-dehydroquinate dehydratase from Methanocella arvoryzae (strain DSM 22066 / NBRC 105507 / MRE50).